The primary structure comprises 92 residues: Turripeptide UID-02 (92 aa).

Residues 1 to 21 (MGFYMLLTVALLLTSLMNVEA) form the signal peptide. Positions 22–39 (TPVDQAERSALEKSGLGN) are excised as a propeptide.

As to expression, expressed by the venom duct.

The protein localises to the secreted. This chain is Turripeptide UID-02, found in Gemmula speciosa (Splendid gem-turris).